The primary structure comprises 1669 residues: Collagen alpha-1(IV) chain (1669 aa).

The signal sequence occupies residues 1 to 27 (MGPRLGVWLLLLLAALLLHEESSRAAA). Residues 28-172 (KGGCAGSGCG…LGHIPGTLLK (145 aa)) constitute a propeptide, N-terminal propeptide (7S domain). The disordered stretch occupies residues 50-1445 (ERGLPGLQGV…PPGTPSVDHG (1396 aa)). The tract at residues 173 to 1440 (GERGYPGQPG…PGSMGPPGTP (1268 aa)) is triple-helical region. Pro residues predominate over residues 196 to 214 (VGPPGFTGPPGPPGPPGPP). A 3-hydroxyproline mark is found at proline 204, proline 207, and proline 210. Composition is skewed to basic and acidic residues over residues 254–263 (TAMRGEKGQK) and 289–298 (PGKDGEKGEK). A compositionally biased stretch (gly residues) spans 347–356 (GYPGGPGAKG). The span at 357–366 (ETGPKGFPGI) shows a compositional bias: low complexity. A compositionally biased stretch (pro residues) spans 367-376 (PGQPGPPGFP). Positions 396–412 (PGLPGVSLPGPSGRDGL) are enriched in low complexity. Composition is skewed to pro residues over residues 413–424 (PGPPGPPGPPGQ) and 436–448 (PGPP…PGIP). Residues 485-494 (PGEIGFPGQP) are compositionally biased toward low complexity. Composition is skewed to basic and acidic residues over residues 497–508 (KGDRGLPGRDGL) and 535–545 (FDIRLKGDKGD). Residues 586–595 (GPPGGVGFPG) are compositionally biased toward gly residues. 2 positions are modified to 3-hydroxyproline: proline 587 and proline 602. Proline 603 carries the post-translational modification 4-hydroxyproline. Proline 605 carries the 3-hydroxyproline modification. 5 positions are modified to 4-hydroxyproline: proline 606, proline 623, proline 626, proline 629, and proline 632. Proline 647 is modified (3-hydroxyproline). Composition is skewed to gly residues over residues 758 to 767 (GNVGGPGIPG) and 797 to 817 (GVPG…GPPG). The segment covering 847–871 (SQGLPGLTGQSGLPGLPGQQGTPGQ) has biased composition (low complexity). Basic and acidic residues predominate over residues 937–955 (SMDKVDMGSMKGEKGDQGE). Residues 1011–1020 (GSAGGMGLPG) are compositionally biased toward gly residues. 3 stretches are compositionally biased toward low complexity: residues 1030 to 1040 (IPGPQGIPGLP), 1101 to 1114 (SPGS…PGLP), and 1193 to 1212 (FPGL…QGFM). Proline 1214 carries the post-translational modification 3-hydroxyproline. Positions 1247 to 1258 (PGRPGPMGPPGL) are enriched in pro residues. Over residues 1290–1299 (GMPGIGGSPG) the composition is skewed to gly residues. Residues 1413–1428 (FGPPGPRGFPGPPGPD) show a composition bias toward pro residues. At proline 1424 the chain carries 3-hydroxyproline. Residues 1445–1669 (GFLVTRHSQT…SRCQVCMRRT (225 aa)) form the Collagen IV NC1 domain. 6 cysteine pairs are disulfide-bonded: cysteine 1460-cysteine 1551, cysteine 1493-cysteine 1548, cysteine 1505-cysteine 1511, cysteine 1570-cysteine 1665, cysteine 1604-cysteine 1662, and cysteine 1616-cysteine 1622. Residue methionine 1533 forms an S-Lysyl-methionine sulfilimine (Met-Lys) (interchain with K-1651) linkage. Lysine 1651 is covalently cross-linked (S-Lysyl-methionine sulfilimine (Lys-Met) (interchain with M-1533)).

Belongs to the type IV collagen family. As to quaternary structure, there are six type IV collagen isoforms, alpha 1(IV)-alpha 6(IV), each of which can form a triple helix structure with 2 other chains to generate type IV collagen network. Interacts with EFEMP2. In terms of processing, lysines at the third position of the tripeptide repeating unit (G-X-Y) are hydroxylated in all cases. The modified lysines can be O-glycosylated. Contains 4-hydroxyproline. Prolines at the third position of the tripeptide repeating unit (G-X-Y) are hydroxylated in some or all of the chains. Post-translationally, contains 3-hydroxyproline. This modification occurs on the first proline residue in the sequence motif Gly-Pro-Hyp, where Hyp is 4-hydroxyproline. In terms of processing, type IV collagens contain numerous cysteine residues which are involved in inter- and intramolecular disulfide bonding. 12 of these, located in the NC1 domain, are conserved in all known type IV collagens. The trimeric structure of the NC1 domains is stabilized by covalent bonds (sulfilimine cross-links) between Lys and Met residues. These cross-links are important for the mechanical stability of the basement membrane. Sulfilimine cross-link is catalyzed by PXDN. Post-translationally, proteolytic processing produces the C-terminal NC1 peptide, arresten.

The protein localises to the secreted. It is found in the extracellular space. Its subcellular location is the extracellular matrix. It localises to the basement membrane. Functionally, type IV collagen is the major structural component of glomerular basement membranes (GBM), forming a 'chicken-wire' meshwork together with laminins, proteoglycans and entactin/nidogen. Its function is as follows. Arresten, comprising the C-terminal NC1 domain, inhibits angiogenesis and tumor formation. The C-terminal half is found to possess the anti-angiogenic activity. Specifically inhibits endothelial cell proliferation, migration and tube formation. This chain is Collagen alpha-1(IV) chain, found in Bos taurus (Bovine).